Reading from the N-terminus, the 100-residue chain is NADH-quinone oxidoreductase subunit K (100 aa).

3 helical membrane passes run 1–21 (MIGLNHYLIVSGLLFCIGLAG), 28–48 (ILLLFFSTEIMLNAINIGFIA), and 64–84 (FIIAIAASEVAIGLGLVILWF).

The protein belongs to the complex I subunit 4L family. In terms of assembly, NDH-1 is composed of 14 different subunits. Subunits NuoA, H, J, K, L, M, N constitute the membrane sector of the complex.

It localises to the cell inner membrane. The catalysed reaction is a quinone + NADH + 5 H(+)(in) = a quinol + NAD(+) + 4 H(+)(out). Functionally, NDH-1 shuttles electrons from NADH, via FMN and iron-sulfur (Fe-S) centers, to quinones in the respiratory chain. The immediate electron acceptor for the enzyme in this species is believed to be ubiquinone. Couples the redox reaction to proton translocation (for every two electrons transferred, four hydrogen ions are translocated across the cytoplasmic membrane), and thus conserves the redox energy in a proton gradient. The polypeptide is NADH-quinone oxidoreductase subunit K (Helicobacter pylori (strain G27)).